The sequence spans 93 residues: UPF0728 protein C10orf53 homolog (93 aa).

This sequence belongs to the UPF0728 family.

The sequence is that of UPF0728 protein C10orf53 homolog from Bos taurus (Bovine).